We begin with the raw amino-acid sequence, 547 residues long: CTP synthase (547 aa).

The segment at 1–265 is amidoligase domain; the sequence is MARYIFITGG…DQAVLDAFDI (265 aa). Serine 13 contacts CTP. A UTP-binding site is contributed by serine 13. ATP contacts are provided by residues 14-19 and aspartate 71; that span reads SLGKGL. Mg(2+) contacts are provided by aspartate 71 and glutamate 139. Residues 146-148, 186-191, and lysine 222 each bind CTP; these read DIE and KTKPTQ. Residues 186-191 and lysine 222 contribute to the UTP site; that span reads KTKPTQ. The region spanning 291–546 is the Glutamine amidotransferase type-1 domain; sequence KVAIVGKYTQ…IRAAKENSRL (256 aa). Glycine 353 contributes to the L-glutamine binding site. The active-site Nucleophile; for glutamine hydrolysis is the cysteine 380. L-glutamine contacts are provided by residues 381-384, glutamate 404, and arginine 474; that span reads LGMQ. Catalysis depends on residues histidine 519 and glutamate 521.

The protein belongs to the CTP synthase family. In terms of assembly, homotetramer.

The enzyme catalyses UTP + L-glutamine + ATP + H2O = CTP + L-glutamate + ADP + phosphate + 2 H(+). It carries out the reaction L-glutamine + H2O = L-glutamate + NH4(+). It catalyses the reaction UTP + NH4(+) + ATP = CTP + ADP + phosphate + 2 H(+). It participates in pyrimidine metabolism; CTP biosynthesis via de novo pathway; CTP from UDP: step 2/2. Its activity is regulated as follows. Allosterically activated by GTP, when glutamine is the substrate; GTP has no effect on the reaction when ammonia is the substrate. The allosteric effector GTP functions by stabilizing the protein conformation that binds the tetrahedral intermediate(s) formed during glutamine hydrolysis. Inhibited by the product CTP, via allosteric rather than competitive inhibition. Catalyzes the ATP-dependent amination of UTP to CTP with either L-glutamine or ammonia as the source of nitrogen. Regulates intracellular CTP levels through interactions with the four ribonucleotide triphosphates. In Roseobacter denitrificans (strain ATCC 33942 / OCh 114) (Erythrobacter sp. (strain OCh 114)), this protein is CTP synthase.